The sequence spans 275 residues: Bis(5'-nucleosyl)-tetraphosphatase, symmetrical (275 aa).

Belongs to the Ap4A hydrolase family.

The enzyme catalyses P(1),P(4)-bis(5'-adenosyl) tetraphosphate + H2O = 2 ADP + 2 H(+). Functionally, hydrolyzes diadenosine 5',5'''-P1,P4-tetraphosphate to yield ADP. This chain is Bis(5'-nucleosyl)-tetraphosphatase, symmetrical, found in Actinobacillus succinogenes (strain ATCC 55618 / DSM 22257 / CCUG 43843 / 130Z).